A 193-amino-acid chain; its full sequence is Dual-action ribosomal maturation protein DarP (193 aa).

The segment covering 1–10 (MRGRDEDTGE) has biased composition (basic and acidic residues). Disordered regions lie at residues 1 to 20 (MRGR…SQQR) and 170 to 193 (SQKP…ENDE). Positions 181–193 (GLEDEESASENDE) are enriched in acidic residues.

It belongs to the DarP family.

It is found in the cytoplasm. Functionally, member of a network of 50S ribosomal subunit biogenesis factors which assembles along the 30S-50S interface, preventing incorrect 23S rRNA structures from forming. Promotes peptidyl transferase center (PTC) maturation. The protein is Dual-action ribosomal maturation protein DarP of Xanthomonas campestris pv. campestris (strain 8004).